The following is a 274-amino-acid chain: MTLQETIIKELGVKPSIDPKEEIRRSIDFLKDYLKKHPFLKTYVLGISGGQDSTLAGRLAQLTMEEMRAETGDDSYQFIAIRLPYGVQADESDAQAALAFIQPDVSLTINIKESTDAMVAAVNANGLAMSDFNKGNAKARMRMIAQYAIAGERKGAVIGTDHAAENITGFFTKHGDGGADILPLFRLNKRQGKQLLAALGADEKLYLKVPTADLEEDKPGLADEVALGVTYNQIDDYLEGKTIDPQSQTIIEGWWNKTAHKRHLPITIFDDFWK.

46 to 53 contributes to the ATP binding site; it reads GISGGQDS. Residue D52 participates in Mg(2+) binding. R140 is a binding site for deamido-NAD(+). T160 serves as a coordination point for ATP. E165 is a binding site for Mg(2+). The deamido-NAD(+) site is built by K173 and D180. Positions 189 and 211 each coordinate ATP. 260 to 261 contributes to the deamido-NAD(+) binding site; that stretch reads HK.

The protein belongs to the NAD synthetase family. In terms of assembly, homodimer.

It catalyses the reaction deamido-NAD(+) + NH4(+) + ATP = AMP + diphosphate + NAD(+) + H(+). Its pathway is cofactor biosynthesis; NAD(+) biosynthesis; NAD(+) from deamido-NAD(+) (ammonia route): step 1/1. Catalyzes the ATP-dependent amidation of deamido-NAD to form NAD. Uses ammonia as a nitrogen source. The polypeptide is NH(3)-dependent NAD(+) synthetase (Streptococcus suis (strain 05ZYH33)).